We begin with the raw amino-acid sequence, 341 residues long: MKEPAFWRTDGGRGSGALARALLAPLGWIHAWAVARRIRKATPVRIGPKVVCVGNLTVGGTGKTPVTQTLMQRLAEMDLTAASLSRGYGGREAGPLRIDPATHDASTVGDEPLLLARTGQAWIARDRAAGGRAIEAAGGVDLVLMDDGHQNPDLAKDCSIVVVDGLTGWGPGTIVPAGPLREPVATGLARADAVIVMMPDAATEPDWTGLGLSDLSIPVFHAWLEPLAPPPAGKLVAFAGIGRPEKFFDALRAAGGDIGEVAVYGDHHAFNAGDLRHLDALAAAHDAQLITTEKDWVRLPVDIQARVTAWPVRAVFANPGALDGLLRDVMDADMDAGGEAG.

Position 57–64 (57–64) interacts with ATP; the sequence is TVGGTGKT.

Belongs to the LpxK family.

The catalysed reaction is a lipid A disaccharide + ATP = a lipid IVA + ADP + H(+). It participates in glycolipid biosynthesis; lipid IV(A) biosynthesis; lipid IV(A) from (3R)-3-hydroxytetradecanoyl-[acyl-carrier-protein] and UDP-N-acetyl-alpha-D-glucosamine: step 6/6. Its function is as follows. Transfers the gamma-phosphate of ATP to the 4'-position of a tetraacyldisaccharide 1-phosphate intermediate (termed DS-1-P) to form tetraacyldisaccharide 1,4'-bis-phosphate (lipid IVA). The protein is Tetraacyldisaccharide 4'-kinase of Maricaulis maris (strain MCS10) (Caulobacter maris).